The following is a 149-amino-acid chain: Ribosomal RNA large subunit methyltransferase H (149 aa).

S-adenosyl-L-methionine contacts are provided by residues Leu-71, Gly-98, and 117–122 (LSKMTL).

It belongs to the RNA methyltransferase RlmH family. As to quaternary structure, homodimer.

The protein localises to the cytoplasm. It catalyses the reaction pseudouridine(1915) in 23S rRNA + S-adenosyl-L-methionine = N(3)-methylpseudouridine(1915) in 23S rRNA + S-adenosyl-L-homocysteine + H(+). In terms of biological role, specifically methylates the pseudouridine at position 1915 (m3Psi1915) in 23S rRNA. The sequence is that of Ribosomal RNA large subunit methyltransferase H from Campylobacter fetus subsp. fetus (strain 82-40).